Here is a 417-residue protein sequence, read N- to C-terminus: Odorant receptor 65a (417 aa).

At 1-62 (MTELRSERKN…MNSEQRRLPR (62 aa)) the chain is on the cytoplasmic side. Residues 63–83 (IVAWQYFVSIQLATALASLFY) traverse the membrane as a helical segment. Topologically, residues 84-98 (GISESIGDIVNLGRD) are extracellular. Residues 99–119 (LVFIITIIFICFRLVFFAQYA) traverse the membrane as a helical segment. At 120–152 (GELDVIIDALEDIYHWSIKGPATKEVQETKRLH) the chain is on the cytoplasmic side. A helical transmembrane segment spans residues 153–173 (FLLFMALIITWFSFLILFMLI). Residues 174–206 (KISTPFWIESQTLPFHVSWPFQLHDPSKHPIAY) are Extracellular-facing. The helical transmembrane segment at 207–227 (IIIFVSQSTTMLYFLIWLGVV) threads the bilayer. Topologically, residues 228-290 (ENMGVSLFFE…TDRCNHIFNG (63 aa)) are cytoplasmic. The helical transmembrane segment at 291–311 (AFIMQMLINFLLVSLSLFEVL) threads the bilayer. At 312–316 (AAKKN) the chain is on the extracellular side. Residues 317-337 (PQVAVEYMIIMLMTLGHLSFW) traverse the membrane as a helical segment. At 338-393 (SKFGDMFSKESEQVALAVYEAYDPNVGSKSIHRQFCFFIQRAQKPLIMKASPFPPF) the chain is on the cytoplasmic side. A helical membrane pass occupies residues 394-414 (NLENYMFILKQCYSILTILAN). Over 415–417 (TLE) the chain is Extracellular.

The protein belongs to the insect chemoreceptor superfamily. Heteromeric odorant receptor channel (TC 1.A.69) family. Or49a subfamily. Interacts with Orco. Complexes exist early in the endomembrane system in olfactory sensory neurons (OSNs), coupling these complexes to the conserved ciliary trafficking pathway. In terms of tissue distribution, expressed in olfactory sensory neurons in the antenna.

The protein localises to the cell membrane. Functionally, odorant receptor which mediates acceptance or avoidance behavior, depending on its substrates. The odorant receptor repertoire encodes a large collection of odor stimuli that vary widely in identity, intensity, and duration. May form a complex with Orco to form odorant-sensing units, providing sensitive and prolonged odorant signaling and calcium permeability. Involved in olfactory communication for modulating aggression through the sensing of the male-specific pheromone 11-cis-vaccenyl acetate (cVA). Although acute exposure to cVA elicites aggression through Or67d olfactory receptor neurons (ORNs), chronic cVA exposure reduces aggression through Or65a ORNs. Moreover, cVA leads to generalized learning with mated females. It is a major component of the male cuticular hydrocarbon profile, but it is not found on virgin females. During copulation, cVA is transferred to the female in ejaculate along with sperm and peptides that decrease her sexual receptivity. This chain is Odorant receptor 65a (Or65a), found in Drosophila melanogaster (Fruit fly).